The primary structure comprises 146 residues: Hemoglobin cathodic subunit beta (146 aa).

The Globin domain occupies 2–146 (HFSDAERDAI…VAAALSSRYF (145 aa)). Positions 63 and 92 each coordinate heme b.

The protein belongs to the globin family. As to quaternary structure, heterotetramer of two alpha chains and two beta chains. As to expression, red blood cells.

Its function is as follows. Involved in oxygen transport from gills to the various peripheral tissues. The polypeptide is Hemoglobin cathodic subunit beta (hbb) (Hoplosternum littorale (Hassar)).